A 303-amino-acid polypeptide reads, in one-letter code: L(+)-tartrate dehydratase subunit alpha (303 aa).

Residues cysteine 71, cysteine 190, and cysteine 277 each coordinate iron-sulfur cluster.

The protein belongs to the class-I fumarase family. As to quaternary structure, tetramer of two alpha and two beta subunits. Iron-sulfur cluster is required as a cofactor.

The enzyme catalyses (2R,3R)-tartrate = oxaloacetate + H2O. The protein is L(+)-tartrate dehydratase subunit alpha (ttdA) of Escherichia coli O157:H7.